The sequence spans 559 residues: Germacrene A synthase 1 (559 aa).

Residues aspartate 312, aspartate 316, aspartate 456, threonine 460, and glutamate 464 each contribute to the Mg(2+) site. The short motif at 312–316 (DDTYD) is the DDXXD motif element.

Belongs to the terpene synthase family. In terms of assembly, monomer. It depends on Mg(2+) as a cofactor. As to expression, mainly expressed in sunflower trichomes.

It carries out the reaction (2E,6E)-farnesyl diphosphate = (+)-(R)-germacrene A + diphosphate. It functions in the pathway secondary metabolite biosynthesis; terpenoid biosynthesis. Sesquiterpene synthase involved in germacrene A biosynthesis. Germacrene A is a precursor of several sesquiterpene lactones. This is Germacrene A synthase 1 from Helianthus annuus (Common sunflower).